We begin with the raw amino-acid sequence, 353 residues long: Melatonin receptor type 1A (353 aa).

Residues 1–15 (MKGNGSTLLNASQQA) show a composition bias toward polar residues. The interval 1–23 (MKGNGSTLLNASQQAPGVGEGGG) is disordered. Residues 1–32 (MKGNGSTLLNASQQAPGVGEGGGPRPSWLAST) lie on the Extracellular side of the membrane. 2 N-linked (GlcNAc...) asparagine glycosylation sites follow: Asn-4 and Asn-10. The helical transmembrane segment at 33 to 53 (LAFILIFTIVVDILGNLLVIL) threads the bilayer. Residues 54 to 66 (SVYRNKKLRNAGN) lie on the Cytoplasmic side of the membrane. A helical transmembrane segment spans residues 67-87 (IFVVSLAIADLVVAIYPYPLV). Residues 88-105 (LTSIFNNGWNLGYLHCQI) lie on the Extracellular side of the membrane. Cys-103 and Cys-180 are joined by a disulfide. The chain crosses the membrane as a helical span at residues 106–126 (SAFLMGLSVIGSIFNITGIAI). Topologically, residues 127 to 147 (NRYCYICHSLKYDRLYSNKNS) are cytoplasmic. A helical membrane pass occupies residues 148-168 (LCYVFLIWVLTLVAIMPNLQT). Over 169–190 (GTLQYDPRIYSCTFTQSVSSAY) the chain is Extracellular. The chain crosses the membrane as a helical span at residues 191 to 211 (TIAVVVFHFIVPMIIVIFCYL). Topologically, residues 212–243 (RIWILVLQVRRRVKPDSKPRLKPQDFRNFVTM) are cytoplasmic. The chain crosses the membrane as a helical span at residues 244-264 (FVVFVLFAICWAPLNFIGLIV). The Extracellular segment spans residues 265-277 (ASDPATMAPRIPE). The chain crosses the membrane as a helical span at residues 278 to 298 (WLFVASYYMAYFNSCLNAIIY). The Cytoplasmic segment spans residues 299–353 (GLLNQNFRQEYKRILVSLFTAKMCFVDSSNDPADKIKCKPAPLIANNNLIKVDSV).

It belongs to the G-protein coupled receptor 1 family. As to expression, at least in the brain, more precisely in the pars tuberalis and the suprachiasmatic nucleus.

The protein resides in the cell membrane. In terms of biological role, high affinity receptor for melatonin. Likely to mediate the reproductive and circadian actions of melatonin. The activity of this receptor is mediated by pertussis toxin sensitive G proteins that inhibit adenylate cyclase activity. Possibly involved in sleep induction, by melatonin activation of the potassium channel KCNMA1/BK and the dissociation of G-beta and G-gamma subunits, thereby decreasing synaptic transmission. The polypeptide is Melatonin receptor type 1A (MTNR1A) (Phodopus sungorus (Striped hairy-footed hamster)).